A 451-amino-acid polypeptide reads, in one-letter code: Clusterin (451 aa).

Residues 1-18 form the signal peptide; it reads MELPLLALLSLGLVCQGG. 5 disulfide bridges follow: Cys-98/Cys-314, Cys-109/Cys-306, Cys-112/Cys-303, Cys-117/Cys-296, and Cys-125/Cys-286. Asn-99, Asn-141, Asn-278, Asn-355, Asn-375, and Asn-447 each carry an N-linked (GlcNAc...) asparagine glycan.

The protein belongs to the clusterin family. Antiparallel disulfide-linked heterodimer of an alpha chain and a beta chain. Self-associates and forms higher oligomers. Interacts with a broad range of misfolded proteins. In terms of processing, proteolytically cleaved on its way through the secretory system, probably within the Golgi lumen. Post-translationally, polyubiquitinated, leading to proteasomal degradation.

The protein resides in the secreted. Its subcellular location is the cytoplasmic vesicle. The protein localises to the secretory vesicle. It is found in the chromaffin granule. It localises to the nucleus. The protein resides in the cytoplasm. Its subcellular location is the mitochondrion membrane. The protein localises to the cytosol. It is found in the endoplasmic reticulum. Functions as extracellular chaperone that prevents aggregation of nonnative proteins. Prevents stress-induced aggregation of blood plasma proteins. Does not require ATP. Maintains partially unfolded proteins in a state appropriate for subsequent refolding by other chaperones, such as HSPA8/HSC70. Does not refold proteins by itself. Binding to cell surface receptors triggers internalization of the chaperone-client complex and subsequent lysosomal or proteasomal degradation. When secreted, protects cells against apoptosis and against cytolysis by complement: inhibits assembly of the complement membrane attack complex (MAC) by preventing polymerization of C9 pore component of the MAC complex. Intracellular forms interact with ubiquitin and SCF (SKP1-CUL1-F-box protein) E3 ubiquitin-protein ligase complexes and promote the ubiquitination and subsequent proteasomal degradation of target proteins. Modulates NF-kappa-B transcriptional activity. Promotes apoptosis when in the nucleus. Inhibits apoptosis when associated with the mitochondrial membrane by interference with BAX-dependent release of cytochrome c into the cytoplasm. Plays a role in the regulation of cell proliferation. This is Clusterin (CLU) from Coturnix japonica (Japanese quail).